The primary structure comprises 328 residues: Phenylalanine--tRNA ligase alpha subunit (328 aa).

Residue glutamate 253 participates in Mg(2+) binding.

This sequence belongs to the class-II aminoacyl-tRNA synthetase family. Phe-tRNA synthetase alpha subunit type 1 subfamily. In terms of assembly, tetramer of two alpha and two beta subunits. Mg(2+) is required as a cofactor.

It localises to the cytoplasm. The catalysed reaction is tRNA(Phe) + L-phenylalanine + ATP = L-phenylalanyl-tRNA(Phe) + AMP + diphosphate + H(+). This is Phenylalanine--tRNA ligase alpha subunit from Coxiella burnetii (strain Dugway 5J108-111).